The chain runs to 378 residues: Homeobox protein Meis3 (378 aa).

The tract at residues 24–57 is disordered; sequence FSEAAPSVPRAPGPYTPHRPPQLQAPGLDSDSLK. The span at 32–43 shows a compositional bias: pro residues; that stretch reads PRAPGPYTPHRP. Residues 99–182 form the MEIS N-terminal domain; the sequence is GGDVCSSDSF…PIDLVIEDRD (84 aa). A disordered region spans residues 203–265; it reads NTTWIRDHED…DEDLDLERRR (63 aa). The span at 230 to 244 shows a compositional bias: low complexity; it reads SQSGDNSSDQGDGLD. Residues 265-327 constitute a DNA-binding region (homeobox; TALE-type); it reads RNKKRGIFPK…NARRRIVQPM (63 aa).

The protein belongs to the TALE/MEIS homeobox family. As to expression, expressed at high levels in the brain. Significant expression also observed in the heart, spleen and lung. Expressed in pancreatic islets (beta-cells and non-beta-cells).

The protein resides in the nucleus. Its function is as follows. Transcriptional regulator which directly modulates PDPK1 expression, thus promoting survival of pancreatic beta-cells. Also regulates expression of NDFIP1, BNIP3, and CCNG1. The chain is Homeobox protein Meis3 (Meis3) from Mus musculus (Mouse).